Here is a 1181-residue protein sequence, read N- to C-terminus: Integrin alpha-2 (1181 aa).

The first 29 residues, 1–29 (MGPERTGAAPLPLLLVLALSQGILNCCLA), serve as a signal peptide directing secretion. Topologically, residues 30-1132 (YNVGLPEAKI…KPDEKAEVPT (1103 aa)) are extracellular. FG-GAP repeat units lie at residues 34–92 (LPEA…TATC) and 101–161 (TSIP…LSAS). Residues Cys83 and Cys92 are joined by a disulfide bond. N-linked (GlcNAc...) asparagine glycosylation is found at Asn105, Asn112, and Asn343. Residues 188 to 365 (WDAVKNFLEK…TLGEQIFSIE (178 aa)) enclose the VWFA domain. FG-GAP repeat units lie at residues 366–420 (GTVQ…LIFP), 423–475 (AFDQ…ENGN), 477–539 (TVIQ…ILGQ), 540–598 (HQFL…TIRT), and 602–664 (QKIL…FTPE). N-linked (GlcNAc...) asparagine glycosylation is found at Asn432, Asn460, and Asn475. Positions 499, 501, 503, 507, 563, 565, 567, 571, 627, 629, 631, and 635 each coordinate Ca(2+). Disulfide bonds link Cys680-Cys737, Cys789-Cys795, Cys865-Cys876, Cys1019-Cys1050, and Cys1055-Cys1060. The N-linked (GlcNAc...) asparagine glycan is linked to Asn699. N-linked (GlcNAc...) asparagine glycosylation is found at Asn1057, Asn1074, and Asn1081. A helical membrane pass occupies residues 1133–1154 (GVIIGSIIAGILLLLALVAILW). The segment at 1155 to 1161 (KLGFFKR) is interaction with HPS5. At 1155–1181 (KLGFFKRKYEKMTKNPDEIDETTELSS) the chain is on the cytoplasmic side. The GFFKR motif motif lies at 1157–1161 (GFFKR).

The protein belongs to the integrin alpha chain family. In terms of assembly, heterodimer of an alpha and a beta subunit. Alpha-2 associates with beta-1. Interacts with HPS5 and RAB21. As to quaternary structure, (Microbial infection) Integrin ITGA2:ITGB1 interacts (via ITAG2 I-domain) with rotavirus A VP4 protein. (Microbial infection) Integrin ITGA2:ITGB1 interacts with human echoviruses 1 and 8 capsid proteins.

It localises to the membrane. Functionally, integrin alpha-2/beta-1 is a receptor for laminin, collagen, collagen C-propeptides, fibronectin and E-cadherin. It recognizes the proline-hydroxylated sequence G-F-P-G-E-R in collagen. It is responsible for adhesion of platelets and other cells to collagens, modulation of collagen and collagenase gene expression, force generation and organization of newly synthesized extracellular matrix. (Microbial infection) Integrin ITGA2:ITGB1 acts as a receptor for Human rotavirus A. In terms of biological role, (Microbial infection) Integrin ITGA2:ITGB1 acts as a receptor for Human echoviruses 1 and 8. The sequence is that of Integrin alpha-2 (ITGA2) from Homo sapiens (Human).